The sequence spans 106 residues: ATP-dependent Clp protease adapter protein ClpS (106 aa).

This sequence belongs to the ClpS family. Binds to the N-terminal domain of the chaperone ClpA.

Involved in the modulation of the specificity of the ClpAP-mediated ATP-dependent protein degradation. The chain is ATP-dependent Clp protease adapter protein ClpS from Aliivibrio fischeri (strain ATCC 700601 / ES114) (Vibrio fischeri).